Here is a 529-residue protein sequence, read N- to C-terminus: MTDRIPLKRALISVSDKTGLVDFARALSARGVEILSTGGTAKTLREAGLSVVDVADVTGFPEMMDGRVKTLHPVVHGGLLALRDNDEHMAAAKSHRIGMIDLLVVNLYPFEATVAKGAAYDDCIENIDIGGPAMIRAAAKNHAFVTVVVDVQDYAAVLAELDANDDRTGLAFRQRQAQIAYARTAAYDAAVSTWMAGAIGEETPRRRSFSGQLAQSLRYGENPHQSAAFYRDGSDRPGVATARQWQGKELSYNNINDTDAAFELVAEFDPAEGPAVAIIKHANPCGVARGDSAVDAYLRAFDCDRTSAFGGIIALNTTLDGETAQAITEIFTEVVIAPDATDEAKEIFAAKKNLRLLTTGGLPDPAAPGLAFRQVAGGFLVQGRDNGRILRADLKVVTKRQPTDQELADLLFAWTVAKHVKSNAIVYARDLATVGIGAGQMSRVDSTRIGKRKSEDMAEALGLAQALTIGSSVASDAFFPFADGVEALAAAGARAVIQPGGSMRDAEVIEAADRLGLAMVFTGQRHFRH.

One can recognise an MGS-like domain in the interval 3–149 (DRIPLKRALI…KNHAFVTVVV (147 aa)).

The protein belongs to the PurH family.

It carries out the reaction (6R)-10-formyltetrahydrofolate + 5-amino-1-(5-phospho-beta-D-ribosyl)imidazole-4-carboxamide = 5-formamido-1-(5-phospho-D-ribosyl)imidazole-4-carboxamide + (6S)-5,6,7,8-tetrahydrofolate. The catalysed reaction is IMP + H2O = 5-formamido-1-(5-phospho-D-ribosyl)imidazole-4-carboxamide. It functions in the pathway purine metabolism; IMP biosynthesis via de novo pathway; 5-formamido-1-(5-phospho-D-ribosyl)imidazole-4-carboxamide from 5-amino-1-(5-phospho-D-ribosyl)imidazole-4-carboxamide (10-formyl THF route): step 1/1. Its pathway is purine metabolism; IMP biosynthesis via de novo pathway; IMP from 5-formamido-1-(5-phospho-D-ribosyl)imidazole-4-carboxamide: step 1/1. The sequence is that of Bifunctional purine biosynthesis protein PurH from Paracoccus denitrificans (strain Pd 1222).